We begin with the raw amino-acid sequence, 240 residues long: Probable septum site-determining protein MinC (240 aa).

The protein belongs to the MinC family. In terms of assembly, interacts with MinD and FtsZ.

Cell division inhibitor that blocks the formation of polar Z ring septums. Rapidly oscillates between the poles of the cell to destabilize FtsZ filaments that have formed before they mature into polar Z rings. Prevents FtsZ polymerization. The chain is Probable septum site-determining protein MinC from Acinetobacter baumannii (strain ATCC 17978 / DSM 105126 / CIP 53.77 / LMG 1025 / NCDC KC755 / 5377).